A 62-amino-acid polypeptide reads, in one-letter code: Endoregulin (62 aa).

A helical transmembrane segment spans residues 25 to 45 (LAVIILFITAVLLLILFAIVF).

As to quaternary structure, homooligomer. Can also form heterooligomers with other sarcoplasmic/endoplasmic reticulum calcium ATPase (SERCA) regulators ARLN, PLN, SLN and STRIT1/DWORF. Monomer. Interacts as a monomer with ATP2A2/SERCA2; the interaction results in inhibition of ATP2A2 Ca(2+) affinity.

The protein localises to the endoplasmic reticulum membrane. In terms of biological role, inhibits the activity of the calcium ATPases ATP2A2/SERCA2 and ATP2A3/SERCA3 by decreasing their apparent affinity for Ca(2+). This chain is Endoregulin, found in Homo sapiens (Human).